Here is a 1500-residue protein sequence, read N- to C-terminus: MEKVWESGRRMSRSIGRGMGMEAWGVDEAFMPQNSGGGGGSRGRRRSGRGGTADDDEEALRWAAIERLPTYSRMRTAILSSAEEEAAAAAAGAGKQQYKEVDVRRLGVGERQEFIERVFRVAEEDNQRFLQKLRNRIDRVGIELPTVEVRFEELMVQARCHVGSRALPTLLNTARNIAEAALGLVGVRPGRQATLTILRGVSGAVRPSRMTLLLGPPSSGKTTLLLALAGKLDPSLRRGGEVTYNGFELEEFVAQKTAAYISQTDVHVGEMTVKETLDFSARCQGVGTKYDLLTELARREKEAGIRPEPEVDLFMKATSMEGVESSLQTDYTLRILGLDICADTIVGDQMQRGISGGQKKRVTTGEMIVGPTKVLFMDEISTGLDSSTTFQIVKCLQQIVHLGEATILMSLLQPAPETFELFDDIILLSEGQIVYQGPREYVLEFFESCGFRCPERKGTADFLQEVTSKKDQEQYWADKHRPYRYISVSEFAQRFKRFHVGLQLENHLSVPFDKTRSHQAALVFSKQSVSTTELLKASFAKEWLLIKRNSFVYIFKTIQLIIVALVASTVFLRTQMHTRNLDDGFVYIGALLFSLIVNMFNGFAELSLTITRLPVFFKHRDLLFYPAWIFTLPNVILRIPFSIIESIVWVIVTYYTIGFAPEADRFFKQLLLVFLIQQMAGGLFRATAGLCRSMIIAQTGGALALLIFFVLGGFLLPKAFIPKWWIWGYWVSPLMYGYNALAVNEFYSPRWMNKFVLDNNGVPKRLGIALMEGANIFTDKNWFWIGAAGLLGFTMFFNVLFTLSLVYLNPLGKPQAVISEETAKEAEGNGDARHTVRNGSTKSNGGNHKEMREMRLSARLSNSSSNGVSRLMSIGSNEAGPRRGMVLPFTPLSMSFDDVNYYVDMPAEMKQQGVVDDRLQLLRDVTGSFRPAVLTALMGVSGAGKTTLMDVLAGRKTGGYIEGDMRISGYPKNQETFARISGYCEQNDIHSPQVTVRESLIYSAFLRLPEKIGDQEITDDIKIQFVDEVMELVELDNLKDALVGLPGITGLSTEQRKRLTIAVELVANPSIIFMDEPTSGLDARAAAIVMRTVRNTVDTGRTVVCTIHQPSIDIFEAFDELLLLKRGGQVIYSGQLGRNSQKMIEYFEAIPGVPKIKDKYNPATWMLEVSSVAAEVRLNMDFAEYYKTSDLYKQNKVLVNQLSQPEPGTSDLHFPTKYSQSTIGQFRACLWKQWLTYWRSPDYNLVRFSFTLFTALLLGTIFWKIGTKMGNANSLRMVIGAMYTAVMFIGINNCATVQPIVSIERTVFYRERAAGMYSAMPYAIAQVVMEIPYVFVQTAYYTLIVYAMMSFQWTAAKFFWFFFVSYFSFLYFTYYGMMTVAISPNHEVAAIFAAAFYSLFNLFSGFFIPRPRIPKWWIWYYWLCPLAWTVYGLIVTQYGDLEQIISVPGQSNQTISYYVTHHFGYHRKFMPVVAPVLVLFAVFFAFMYAICIKKLNFQHR.

Residues 26 to 56 (VDEAFMPQNSGGGGGSRGRRRSGRGGTADDD) form a disordered region. One can recognise an ABC transporter 1 domain in the interval 182–455 (LGLVGVRPGR…FESCGFRCPE (274 aa)). ATP is bound at residue 215–222 (GPPSSGKT). In terms of domain architecture, ABC transmembrane type-2 1 spans 533–746 (ELLKASFAKE…GYNALAVNEF (214 aa)). Helical transmembrane passes span 551-571 (FVYI…STVF), 584-604 (GFVY…NGFA), 639-659 (IPFS…TIGF), 670-690 (LLLV…TAGL), 695-715 (IIAQ…GGFL), 724-744 (WWIW…LAVN), and 783-803 (FWIG…LFTL). Over residues 822 to 834 (TAKEAEGNGDARH) the composition is skewed to basic and acidic residues. The tract at residues 822–850 (TAKEAEGNGDARHTVRNGSTKSNGGNHKE) is disordered. Residues 837-846 (RNGSTKSNGG) are compositionally biased toward polar residues. One can recognise an ABC transporter 2 domain in the interval 894 to 1151 (MSFDDVNYYV…KMIEYFEAIP (258 aa)). 939–946 (GVSGAGKT) contacts ATP. The ABC transmembrane type-2 2 domain occupies 1224–1438 (GQFRACLWKQ…TVYGLIVTQY (215 aa)). The next 7 helical transmembrane spans lie at 1245–1265 (LVRF…FWKI), 1277–1297 (MVIG…CATV), 1331–1351 (IPYV…MMSF), 1358–1378 (FFWF…YGMM), 1388–1408 (VAAI…GFFI), 1416–1436 (WWIW…LIVT), and 1472–1492 (VVAP…AICI).

The protein belongs to the ABC transporter superfamily. ABCG family. PDR (TC 3.A.1.205) subfamily.

The protein localises to the membrane. In terms of biological role, may be a general defense protein. This chain is ABC transporter G family member 42, found in Oryza sativa subsp. japonica (Rice).